The chain runs to 183 residues: Segregation and condensation protein B (183 aa).

The protein belongs to the ScpB family. Homodimer. Homodimerization may be required to stabilize the binding of ScpA to the Smc head domains. Component of a cohesin-like complex composed of ScpA, ScpB and the Smc homodimer, in which ScpA and ScpB bind to the head domain of Smc. The presence of the three proteins is required for the association of the complex with DNA.

The protein resides in the cytoplasm. In terms of biological role, participates in chromosomal partition during cell division. May act via the formation of a condensin-like complex containing Smc and ScpA that pull DNA away from mid-cell into both cell halves. This chain is Segregation and condensation protein B, found in Streptococcus pyogenes serotype M1.